We begin with the raw amino-acid sequence, 290 residues long: Carbonic anhydrase-related protein (290 aa).

Residues 1-26 (MADLSFIEDTVAFPEKEEDEEEEEEG) form a disordered region. A Phosphoserine modification is found at Ser5. The span at 16 to 26 (KEEDEEEEEEG) shows a compositional bias: acidic residues. An Alpha-carbonic anhydrase domain is found at 27 to 289 (VEWGYEEGVE…LSDRVIRAAF (263 aa)). His87 functions as the Proton donor/acceptor in the catalytic mechanism. Residues His118 and His141 each coordinate Zn(2+).

This sequence belongs to the alpha-carbonic anhydrase family.

Functionally, does not have a carbonic anhydrase catalytic activity. In Homo sapiens (Human), this protein is Carbonic anhydrase-related protein (CA8).